A 309-amino-acid polypeptide reads, in one-letter code: Replication factor C subunit 4 (309 aa).

ATP contacts are provided by residues Val5, Val17, 42–50 (GPPGTGKTT), Asn134, and Arg192.

This sequence belongs to the activator 1 small subunits family. Component of the replication factor C (RFC) complex.

It localises to the nucleus. Its function is as follows. Component of ATP-dependent clamp loader (RFC and RFC-like) complexes for DNA clamps. During a clamp loading circle, the RFC:clamp complex binds to DNA and the recognition of the double-stranded/single-stranded junction stimulates ATP hydrolysis by RFC. The complex presumably provides bipartite ATP sites in which one subunit supplies a catalytic site for hydrolysis of ATP bound to the neighboring subunit. Dissociation of RFC from the clamp leaves the clamp encircling DNA. Component of the replication factor C (RFC or activator 1) complex which acts during elongation of primed DNA templates by DNA polymerase delta and epsilon. RFC has an essential but redundant activity in sister chromatid cohesion establishment. This chain is Replication factor C subunit 4 (RFC4), found in Encephalitozoon cuniculi (strain GB-M1) (Microsporidian parasite).